A 559-amino-acid polypeptide reads, in one-letter code: MGARALRRERRLRWSPNWTRILPMQPQKTLTAGQALVRLLANYGVDTVFGIPGVHTLELYRGLPGSGIRHVLTRHEQGAGFMADGYARVSGKPGVCFVITGPGVTNVATAIGQAYADSVPLLVISSVNHSASLGKGWGCLHETQDQRAMTAPITAFSALALSPEQLPELIARAYAVFDSERPRPVHISIPLDVLAAPVAHDWSAAVARRPGRGVPCSEALRAAAERLAAARRPMLIAGGGALAAGEALAALSERLAAPLFTSVAGKGLLPPDAPLNAGASLCVAPGWEMIAEADLVLAVGTEMADTDFWRERLPLSGELIRVDIDPRKFNDFYPSAVALRGDARQTLEALLVRLPQEARDSAPAAARVARLRAEIRAAHAPLQALHQAILDRIAAALPADAFVSTDMTQLAYTGNYAFASRAPRSWLHPTGYGTLGYGLPAGIGAKLGAPQRPGLVLVGDGGFLYTAQELATASEELDSPLVVLLWNNDALGQIRDDMLGLDIEPVGVLPRNPDFALLGRAYGCAVRQPQDLDELERDLRAGFGQSGVTLIELRHACAR.

Glutamate 76 provides a ligand contact to thiamine diphosphate.

It belongs to the TPP enzyme family. Thiamine diphosphate serves as cofactor.

The enzyme catalyses 5-guanidino-2-oxopentanoate + H(+) = 4-guanidinobutanal + CO2. The protein operates within amino-acid degradation; L-arginine degradation. Functionally, catalyzes the decarboxylation of 2-ketoarginine, leading to the formation of 4-guanidinobutyraldehyde. The polypeptide is Probable 2-ketoarginine decarboxylase AruI (aruI) (Pseudomonas aeruginosa (strain ATCC 15692 / DSM 22644 / CIP 104116 / JCM 14847 / LMG 12228 / 1C / PRS 101 / PAO1)).